Reading from the N-terminus, the 105-residue chain is Large ribosomal subunit protein bL21 (105 aa).

Belongs to the bacterial ribosomal protein bL21 family. As to quaternary structure, part of the 50S ribosomal subunit. Contacts protein L20.

This protein binds to 23S rRNA in the presence of protein L20. The polypeptide is Large ribosomal subunit protein bL21 (Rhizobium etli (strain ATCC 51251 / DSM 11541 / JCM 21823 / NBRC 15573 / CFN 42)).